We begin with the raw amino-acid sequence, 292 residues long: GTP cyclohydrolase FolE2 (292 aa).

Belongs to the GTP cyclohydrolase IV family.

The enzyme catalyses GTP + H2O = 7,8-dihydroneopterin 3'-triphosphate + formate + H(+). It participates in cofactor biosynthesis; 7,8-dihydroneopterin triphosphate biosynthesis; 7,8-dihydroneopterin triphosphate from GTP: step 1/1. Converts GTP to 7,8-dihydroneopterin triphosphate. The chain is GTP cyclohydrolase FolE2 from Staphylococcus epidermidis (strain ATCC 12228 / FDA PCI 1200).